The sequence spans 296 residues: Arginine/serine-rich protein 1 (296 aa).

The tract at residues 1–131 (MSNYVNDMWP…RSRSRSRERS (131 aa)) is disordered. Serine 12 bears the Phosphoserine mark. A compositionally biased stretch (low complexity) spans 20–31 (SASRSGGSSRLS). Residues 32–125 (SRSRSRSFSR…RSRSRSRSRS (94 aa)) are compositionally biased toward basic residues. Phosphoserine occurs at positions 111 and 113. Arginine 141 carries the post-translational modification Omega-N-methylarginine. Residues 156 to 165 (ERSRWRDRSR) are compositionally biased toward basic and acidic residues. Disordered stretches follow at residues 156–175 (ERSRWRDRSRTRSRSRTPFR) and 217–296 (SHGI…WIPV). Positions 245–261 (EKPSQQRSIAFSSNNSV) are enriched in polar residues. Over residues 272–287 (ATEETSSRSPKIDKKK) the composition is skewed to basic and acidic residues. A Phosphoserine modification is found at serine 280.

This sequence belongs to the RSRP family. Phosphorylated. Phosphorylation at Ser-111 and Ser-113 mediates the interaction with spliceosome proteins.

It localises to the nucleus. Functionally, probably acts as a spliceosomal factor that contributes to spliceosome assembly and regulates the isoform switching of proteins such as PARP6. This is Arginine/serine-rich protein 1 (RSRP1) from Macaca fascicularis (Crab-eating macaque).